The sequence spans 98 residues: Integration host factor subunit beta (98 aa).

It belongs to the bacterial histone-like protein family. As to quaternary structure, heterodimer of an alpha and a beta chain.

In terms of biological role, this protein is one of the two subunits of integration host factor, a specific DNA-binding protein that functions in genetic recombination as well as in transcriptional and translational control. The protein is Integration host factor subunit beta of Marinobacter nauticus (strain ATCC 700491 / DSM 11845 / VT8) (Marinobacter aquaeolei).